We begin with the raw amino-acid sequence, 282 residues long: Transcription factor MYB20 (282 aa).

2 consecutive HTH myb-type domains span residues 9–61 (KVGL…TNYL) and 62–116 (RPDL…KKKL). 2 DNA-binding regions (H-T-H motif) span residues 37–61 (WRAV…TNYL) and 89–112 (WSKI…NTHI).

In terms of tissue distribution, expressed in chalaza of mature seeds, cotyledons, rosette leaves, cauline leaves, veins of stems, mature siliques, sepals and styles. Expressed at low levels in roots.

It localises to the nucleus. Its function is as follows. Transcription factor that acts as a positive regulator of abscisic acid (ABA) signaling in response to salt stress. Acts as a negative regulator ABI1, ABI2 and PP2CA, which are protein phosphatases 2C acting as negative regulator of ABA signaling. Binds to the DNA specific sequence and core element 5'-ACGT-3' found in the promoters of ABI1 and PP2CA to negatively regulate their expression during ABA-dependent salt stress response. This Arabidopsis thaliana (Mouse-ear cress) protein is Transcription factor MYB20.